Reading from the N-terminus, the 647-residue chain is Macrolide export ATP-binding/permease protein MacB (647 aa).

The 239-residue stretch at 6–244 folds into the ABC transporter domain; sequence LEISGCYRTF…VDTAVTKINN (239 aa). 42 to 49 provides a ligand contact to ATP; the sequence is GASGSGKS. A run of 4 helical transmembrane segments spans residues 273–293, 522–542, 577–597, and 612–632; these read FLTM…VALG, LLIS…VMNI, LVCL…GVVF, and SIVA…FLPA.

The protein belongs to the ABC transporter superfamily. Macrolide exporter (TC 3.A.1.122) family. As to quaternary structure, homodimer. Part of the tripartite efflux system MacAB-TolC, which is composed of an inner membrane transporter, MacB, a periplasmic membrane fusion protein, MacA, and an outer membrane component, TolC. The complex forms a large protein conduit and can translocate molecules across both the inner and outer membranes. Interacts with MacA.

The protein localises to the cell inner membrane. In terms of biological role, part of the tripartite efflux system MacAB-TolC. MacB is a non-canonical ABC transporter that contains transmembrane domains (TMD), which form a pore in the inner membrane, and an ATP-binding domain (NBD), which is responsible for energy generation. Confers resistance against macrolides. The polypeptide is Macrolide export ATP-binding/permease protein MacB (Shewanella sp. (strain W3-18-1)).